Reading from the N-terminus, the 402-residue chain is uncharacterized protein (402 aa).

The interval 332 to 402 (MFSSSSSSSE…PEPPPGKPGR (71 aa)) is disordered. Residues 370 to 379 (SETTSLQQYS) show a composition bias toward polar residues. Pro residues predominate over residues 393–402 (PEPPPGKPGR).

This is an uncharacterized protein from Mus musculus (Mouse).